We begin with the raw amino-acid sequence, 421 residues long: Serine--tRNA ligase (421 aa).

229 to 231 (TAE) serves as a coordination point for L-serine. 260–262 (RAE) contributes to the ATP binding site. L-serine is bound at residue Glu-283. 347–350 (EISS) contacts ATP. Ser-383 lines the L-serine pocket.

This sequence belongs to the class-II aminoacyl-tRNA synthetase family. Type-1 seryl-tRNA synthetase subfamily. As to quaternary structure, homodimer. The tRNA molecule binds across the dimer.

The protein localises to the cytoplasm. It catalyses the reaction tRNA(Ser) + L-serine + ATP = L-seryl-tRNA(Ser) + AMP + diphosphate + H(+). The enzyme catalyses tRNA(Sec) + L-serine + ATP = L-seryl-tRNA(Sec) + AMP + diphosphate + H(+). Its pathway is aminoacyl-tRNA biosynthesis; selenocysteinyl-tRNA(Sec) biosynthesis; L-seryl-tRNA(Sec) from L-serine and tRNA(Sec): step 1/1. Catalyzes the attachment of serine to tRNA(Ser). Is also able to aminoacylate tRNA(Sec) with serine, to form the misacylated tRNA L-seryl-tRNA(Sec), which will be further converted into selenocysteinyl-tRNA(Sec). The protein is Serine--tRNA ligase of Desulfitobacterium hafniense (strain DSM 10664 / DCB-2).